The chain runs to 117 residues: Immunoglobulin lambda variable 7-46 (117 aa).

Residues 1 to 19 form the signal peptide; that stretch reads MAWTPLFLFLLTCCPGSNS. The tract at residues 20-44 is framework-1; that stretch reads QAVVTQEPSLTVSPGGTVTLTCGSS. Residues 20–117 form the Ig-like domain; it reads QAVVTQEPSL…YCLLSYSGAR (98 aa). A disulfide bond links Cys-41 and Cys-109. The tract at residues 45–53 is complementarity-determining-1; that stretch reads TGAVTSGHY. Residues 54–70 are framework-2; the sequence is PYWFQQKPGQAPRTLIY. The tract at residues 71-73 is complementarity-determining-2; the sequence is DTS. The tract at residues 74 to 109 is framework-3; sequence NKHSWTPARFSGSLLGGKAALTLLGAQPEDEAEYYC. The interval 110-117 is complementarity-determining-3; that stretch reads LLSYSGAR.

Immunoglobulins are composed of two identical heavy chains and two identical light chains; disulfide-linked.

The protein localises to the secreted. It localises to the cell membrane. In terms of biological role, v region of the variable domain of immunoglobulin light chains that participates in the antigen recognition. Immunoglobulins, also known as antibodies, are membrane-bound or secreted glycoproteins produced by B lymphocytes. In the recognition phase of humoral immunity, the membrane-bound immunoglobulins serve as receptors which, upon binding of a specific antigen, trigger the clonal expansion and differentiation of B lymphocytes into immunoglobulins-secreting plasma cells. Secreted immunoglobulins mediate the effector phase of humoral immunity, which results in the elimination of bound antigens. The antigen binding site is formed by the variable domain of one heavy chain, together with that of its associated light chain. Thus, each immunoglobulin has two antigen binding sites with remarkable affinity for a particular antigen. The variable domains are assembled by a process called V-(D)-J rearrangement and can then be subjected to somatic hypermutations which, after exposure to antigen and selection, allow affinity maturation for a particular antigen. The sequence is that of Immunoglobulin lambda variable 7-46 from Homo sapiens (Human).